Reading from the N-terminus, the 290-residue chain is Glycine--tRNA ligase alpha subunit (290 aa).

The protein belongs to the class-II aminoacyl-tRNA synthetase family. In terms of assembly, tetramer of two alpha and two beta subunits.

Its subcellular location is the cytoplasm. It carries out the reaction tRNA(Gly) + glycine + ATP = glycyl-tRNA(Gly) + AMP + diphosphate. In Desulfotalea psychrophila (strain LSv54 / DSM 12343), this protein is Glycine--tRNA ligase alpha subunit.